The sequence spans 291 residues: ATP synthase gamma chain 2 (291 aa).

A disordered region spans residues 187 to 208 (LLPHPDKDESQDSKPNDATSRW). Positions 190 to 201 (HPDKDESQDSKP) are enriched in basic and acidic residues.

Belongs to the ATPase gamma chain family. In terms of assembly, F-type ATPases have 2 components, CF(1) - the catalytic core - and CF(0) - the membrane proton channel. CF(1) has five subunits: alpha(3), beta(3), gamma(1), delta(1), epsilon(1). CF(0) has three main subunits: a, b and c.

It localises to the cell inner membrane. In terms of biological role, produces ATP from ADP in the presence of a proton gradient across the membrane. The gamma chain is believed to be important in regulating ATPase activity and the flow of protons through the CF(0) complex. This chain is ATP synthase gamma chain 2, found in Photobacterium profundum (strain SS9).